The chain runs to 85 residues: MAHKKAGGSSRNGRDSEAKRLGVKRFGGETVLAGSIIVRQRGTKFHAGTNVGLGKDHTLFATATGKILFEVKGPLNRKYVSIVAE.

Residues 1 to 21 are disordered; the sequence is MAHKKAGGSSRNGRDSEAKRL.

Belongs to the bacterial ribosomal protein bL27 family.

The polypeptide is Large ribosomal subunit protein bL27 (Aeromonas hydrophila subsp. hydrophila (strain ATCC 7966 / DSM 30187 / BCRC 13018 / CCUG 14551 / JCM 1027 / KCTC 2358 / NCIMB 9240 / NCTC 8049)).